We begin with the raw amino-acid sequence, 482 residues long: Catalase easC (482 aa).

His58 is an active-site residue. Tyr347 contributes to the heme binding site.

This sequence belongs to the catalase family. It depends on heme as a cofactor.

It participates in alkaloid biosynthesis; ergot alkaloid biosynthesis. Functionally, catalase; part of the gene cluster that mediates the biosynthesis of fungal ergot alkaloid. DmaW catalyzes the first step of ergot alkaloid biosynthesis by condensing dimethylallyl diphosphate (DMAP) and tryptophan to form 4-dimethylallyl-L-tryptophan. The second step is catalyzed by the methyltransferase easF that methylates 4-dimethylallyl-L-tryptophan in the presence of S-adenosyl-L-methionine, resulting in the formation of 4-dimethylallyl-L-abrine. The catalase easC and the FAD-dependent oxidoreductase easE then transform 4-dimethylallyl-L-abrine to chanoclavine-I which is further oxidized by easD in the presence of NAD(+), resulting in the formation of chanoclavine-I aldehyde. Chanoclavine-I aldehyde is the precursor of ergoamides and ergopeptines in Clavicipitaceae, and clavine-type alcaloids such as fumiclavine in Trichocomaceae. However, the metabolites downstream of chanoclavine-I aldehyde in Arthrodermataceae have not been identified yet. The sequence is that of Catalase easC from Arthroderma otae (strain ATCC MYA-4605 / CBS 113480) (Microsporum canis).